The sequence spans 354 residues: Maleylacetate reductase 1 (354 aa).

The protein belongs to the iron-containing alcohol dehydrogenase family. In terms of assembly, homodimer.

The catalysed reaction is 3-oxoadipate + NAD(+) = maleylacetate + NADH + H(+). The enzyme catalyses 3-oxoadipate + NADP(+) = maleylacetate + NADPH + H(+). Its pathway is aromatic compound metabolism; 3-chlorocatechol degradation. This is Maleylacetate reductase 1 (tfdFI) from Cupriavidus pinatubonensis (strain JMP 134 / LMG 1197) (Cupriavidus necator (strain JMP 134)).